The sequence spans 291 residues: MHAFNLQSPTPSLAERLADLAVDALIDEADLSPKPALVDRRGNGAHTDLHLGLMHASALSLWPAFKEMADAALLLGQVGLPLREALGRIGREGEQAMLATTGGVNTHRGAIWALGLLVAAAALEPQATSAGSVALRAARLALLEDRYAPRPLSHGAQVALRYGVRGAREEAQQGFPAVLQLGLPQLKRSRAQGHGEQNARLDALLAIMSRLADTCVLYRAGELGLQAMQQGARAVLDAGGSATLAGRRRLHELDLQLLTLNASPGGAADLLAASLLLDRIESGDAVNQGAN.

It belongs to the CitG/MdcB family.

The enzyme catalyses 3'-dephospho-CoA + ATP = 2'-(5''-triphospho-alpha-D-ribosyl)-3'-dephospho-CoA + adenine. In terms of biological role, involved in the formation of 2-(5''-phosphoribosyl)-3'-dephosphocoenzyme-A, the prosthetic group of the acyl-carrier protein of the malonate decarboxylase. The sequence is that of Probable 2-(5''-triphosphoribosyl)-3'-dephosphocoenzyme-A synthase from Pseudomonas fluorescens (strain ATCC BAA-477 / NRRL B-23932 / Pf-5).